The sequence spans 218 residues: Tubulin polymerization-promoting protein (218 aa).

Residues M1–P45 form a disordered region. The segment at A2–F115 is mediates interaction with LIMK1. T15 carries the post-translational modification Phosphothreonine. 3 positions are modified to phosphoserine: S19, S31, and S34. Low complexity predominate over residues E33–P45. Zn(2+) is bound by residues H60, H71, C79, and C82. A Phosphothreonine modification is found at T91. Residue S106 is modified to Phosphoserine. S151 carries an O-linked (GlcNAc) serine glycan. 2 positions are modified to phosphoserine: S158 and S159. The segment at L165 to V192 is disordered. A compositionally biased stretch (basic and acidic residues) spans S174 to G183.

It belongs to the TPPP family. Homodimer. Binds tubulin; binding is inhibited by GTP. Interacts with MAPK1. Interacts with GAPDH; the interaction is direct. Interacts with LIMK1 (via the PDZ domain); the interaction is direct. Interacts with LIMK2. Interacts with HDAC6; thereby inhibiting the tubulin deacetylase activity of HDAC6. Interacts with aggregated SNCA; may have a pro-aggregatory role in synucleinopathies. Interacts with DYNLL1. Interacts (via C-terminus) with S100A2, S100A6 and S100B; these interactions inhibit TPPP dimerization. The cofactor is Mg(2+). In terms of processing, phosphorylated by LIMK1 on serine residues; phosphorylation may alter the tubulin polymerization activity. Phosphorylation by LIMK2, but not LIMK1, regulates astral microtubule organization at early stage of mitosis. Phosphorylation by ROCK1 at Ser-31, Ser-106 and Ser-158 inhibits interaction with HDAC6, resulting in decreased acetylation of tubulin, increased cell motility and entry into S-phase. Phosphorylation by CDK1 inhibits the microtubule polymerizing activity. Post-translationally, degraded by the proteasome; zinc-binding inhibits degradation by the proteasome. As to expression, predominantly expressed in mature oligodendrocytes.

It localises to the golgi outpost. Its subcellular location is the cytoplasm. It is found in the cytoskeleton. The protein localises to the microtubule organizing center. The protein resides in the nucleus. It localises to the spindle. It catalyses the reaction GTP + H2O = GDP + phosphate + H(+). Regulator of microtubule dynamics that plays a key role in myelination by promoting elongation of the myelin sheath. Acts as a microtubule nucleation factor in oligodendrocytes: specifically localizes to the postsynaptic Golgi apparatus region, also named Golgi outpost, and promotes microtubule nucleation, an important step for elongation of the myelin sheath. Required for both uniform polarized growth of distal microtubules as well as directing the branching of proximal processes. Shows magnesium-dependent GTPase activity; the role of the GTPase activity is unclear. In addition to microtubule nucleation activity, also involved in microtubule bundling and stabilization of existing microtubules, thereby maintaining the integrity of the microtubule network. Regulates microtubule dynamics by promoting tubulin acetylation: acts by inhibiting the tubulin deacetylase activity of HDAC6. Also regulates cell migration: phosphorylation by ROCK1 inhibits interaction with HDAC6, resulting in decreased acetylation of tubulin and increased cell motility. Plays a role in cell proliferation by regulating the G1/S-phase transition. Involved in astral microtubule organization and mitotic spindle orientation during early stage of mitosis; this process is regulated by phosphorylation by LIMK2. The protein is Tubulin polymerization-promoting protein of Rattus norvegicus (Rat).